The chain runs to 76 residues: MAGTRGLMLLGPGPVAGPRDVGTCRGRQMEIQKHKDNKKLPQGIIIVFRLQTHTTPQIYTQLKGKLRKFFKEPYSE.

The tract at residues 1 to 20 (MAGTRGLMLLGPGPVAGPRD) is disordered.

This is Protein CASC2, isoforms 1/2 (CASC2) from Homo sapiens (Human).